The sequence spans 295 residues: Serpentine receptor class gamma-53 (295 aa).

The next 6 helical transmembrane spans lie at 7-27, 39-61, 121-141, 173-193, 211-230, and 241-261; these read IWLC…VLLS, VITM…RMVF, FYLL…QLLY, CFMS…LYQV, MSLI…AWQT, and IELL…ILLI.

The protein belongs to the nematode receptor-like protein srg family.

It is found in the membrane. The polypeptide is Serpentine receptor class gamma-53 (srg-53) (Caenorhabditis elegans).